Reading from the N-terminus, the 130-residue chain is MAKSARHVTGKAPSSLDAHDRKKSKKKSSSMCVGSMFKSAVKRISREVSPDNNIMLTSNSIQVLCGISYDFVDTVADLAGELARKVGKQTVGSDDIISAFEILLKGELRKLAIREVHNALSKSQAKSRGK.

The interval 1–31 (MAKSARHVTGKAPSSLDAHDRKKSKKKSSSM) is disordered. Residue Lys122 forms a Glycyl lysine isopeptide (Lys-Gly) (interchain with G-Cter in ubiquitin) linkage.

Belongs to the histone H2B family. The nucleosome is a histone octamer containing two molecules each of H2A, H2B, H3 and H4 assembled in one H3-H4 heterotetramer and two H2A-H2B heterodimers. The octamer wraps approximately 147 bp of DNA. In terms of processing, monoubiquitinated to form H2BK123ub1. H2BK123ub1 gives a specific tag for epigenetic transcriptional activation and is also prerequisite for H3K4me and H3K79me formation.

It localises to the nucleus. Its subcellular location is the chromosome. Core component of nucleosome. Nucleosomes wrap and compact DNA into chromatin, limiting DNA accessibility to the cellular machineries which require DNA as a template. Histones thereby play a central role in transcription regulation, DNA repair, DNA replication and chromosomal stability. DNA accessibility is regulated via a complex set of post-translational modifications of histones, also called histone code, and nucleosome remodeling. This is Histone H2B (HTB1) from Encephalitozoon cuniculi (strain GB-M1) (Microsporidian parasite).